Consider the following 169-residue polypeptide: Shikimate kinase (169 aa).

ATP is bound at residue 12-17; the sequence is GCGKST. Serine 16 lines the Mg(2+) pocket. Substrate-binding residues include aspartate 34, arginine 57, and glycine 79. Position 116 (arginine 116) interacts with ATP. Arginine 133 provides a ligand contact to substrate.

Belongs to the shikimate kinase family. In terms of assembly, monomer. Mg(2+) is required as a cofactor.

It is found in the cytoplasm. The enzyme catalyses shikimate + ATP = 3-phosphoshikimate + ADP + H(+). The protein operates within metabolic intermediate biosynthesis; chorismate biosynthesis; chorismate from D-erythrose 4-phosphate and phosphoenolpyruvate: step 5/7. In terms of biological role, catalyzes the specific phosphorylation of the 3-hydroxyl group of shikimic acid using ATP as a cosubstrate. The polypeptide is Shikimate kinase (Clostridium beijerinckii (strain ATCC 51743 / NCIMB 8052) (Clostridium acetobutylicum)).